Consider the following 104-residue polypeptide: MGMGNMNKMMKQMQKMQAQVARLQEELGERTVEASAGGGVVKVTANGRQELVNIKIDPAAVDPEDVEMLQDLILAAVNEALHQSQEMVTREMAKITGNIRLPGF.

This sequence belongs to the YbaB/EbfC family. As to quaternary structure, homodimer.

Its subcellular location is the cytoplasm. It localises to the nucleoid. Functionally, binds to DNA and alters its conformation. May be involved in regulation of gene expression, nucleoid organization and DNA protection. The chain is Nucleoid-associated protein Moth_0028 from Moorella thermoacetica (strain ATCC 39073 / JCM 9320).